Reading from the N-terminus, the 155-residue chain is Ribonuclease H (155 aa).

Residues 9–150 (DGQQVEMWTD…ADALANQGVE (142 aa)) enclose the RNase H type-1 domain. Mg(2+) is bound by residues Asp18, Glu56, Asp78, and Asp142.

This sequence belongs to the RNase H family. As to quaternary structure, monomer. It depends on Mg(2+) as a cofactor.

The protein localises to the cytoplasm. It carries out the reaction Endonucleolytic cleavage to 5'-phosphomonoester.. Endonuclease that specifically degrades the RNA of RNA-DNA hybrids. This Bordetella bronchiseptica (strain ATCC BAA-588 / NCTC 13252 / RB50) (Alcaligenes bronchisepticus) protein is Ribonuclease H.